We begin with the raw amino-acid sequence, 162 residues long: MTARKPFWETKSLNQMTVPEWESLCDGCGLCCLVRFEDEDTGEIIPTRVHCQLFDEHRCTCKDYANRKKTVPDCIKLTPHNIETLEWMPPSCAYRRLHEGKTLPLWHPLITGDRESVHQAGVSVRDQTVSELSFSDPEDALDFVATDLMYDKSDVDWDPEEP.

The protein belongs to the UPF0260 family.

This chain is UPF0260 protein Caul_3920, found in Caulobacter sp. (strain K31).